The sequence spans 142 residues: Nucleoside diphosphate kinase (142 aa).

ATP-binding residues include lysine 11, phenylalanine 59, arginine 87, threonine 93, arginine 104, and asparagine 114. Histidine 117 serves as the catalytic Pros-phosphohistidine intermediate.

Belongs to the NDK family. As to quaternary structure, homotetramer. The cofactor is Mg(2+).

It is found in the cytoplasm. It catalyses the reaction a 2'-deoxyribonucleoside 5'-diphosphate + ATP = a 2'-deoxyribonucleoside 5'-triphosphate + ADP. It carries out the reaction a ribonucleoside 5'-diphosphate + ATP = a ribonucleoside 5'-triphosphate + ADP. Functionally, major role in the synthesis of nucleoside triphosphates other than ATP. The ATP gamma phosphate is transferred to the NDP beta phosphate via a ping-pong mechanism, using a phosphorylated active-site intermediate. This is Nucleoside diphosphate kinase from Dechloromonas aromatica (strain RCB).